Here is a 798-residue protein sequence, read N- to C-terminus: Serine/threonine-protein kinase haspin (798 aa).

A disordered region spans residues 1–110; it reads MAASLPGPGS…WKLRARPSLT (110 aa). Residue S58 is modified to Phosphoserine. Acidic residues predominate over residues 59-70; that stretch reads QSDDPDDPDDPD. S93 carries the phosphoserine; by AURKB modification. At T97 the chain carries Phosphothreonine. Phosphoserine; by AURKB is present on S143. S147 is subject to Phosphoserine. Positions 275-350 are disordered; it reads LVVGNGPEGP…KHQEATETSL (76 aa). Over residues 300-315 the composition is skewed to basic and acidic residues; sequence CQERGLQEAVRREHQE. The 315-residue stretch at 484 to 798 folds into the Protein kinase domain; the sequence is LQRCEKIGEG…DLLCQHSLFK (315 aa). Residues 490-498, K511, 606-611, 649-654, and 687-689 contribute to the ATP site; these read IGEGVFGEV, EFGGID, DLHWGN, and DYT. Catalysis depends on D649, which acts as the Proton acceptor.

This sequence belongs to the protein kinase superfamily. Ser/Thr protein kinase family. Haspin subfamily. Requires Mg(2+) as cofactor. Autophosphorylated on both serine and threonine residues. Strongly phosphorylated during mitosis but this does not appear to significantly affect its intrinsic kinase activity. Phosphorylation by AURKB is required for full activity toward histone H3 at 'Ser-3' in mitosis. As to expression, strongly expressed in testis. Also present in thymus and bone marrow and low levels observed in prostate, intestine, lung, spleen and lymph node. Expressed in fetal skin, liver, kidney and small intestine and also in proliferating but not non-proliferating cell lines.

It localises to the nucleus. The protein localises to the chromosome. It is found in the cytoplasm. The protein resides in the cytoskeleton. Its subcellular location is the spindle. The catalysed reaction is L-seryl-[protein] + ATP = O-phospho-L-seryl-[protein] + ADP + H(+). The enzyme catalyses L-threonyl-[protein] + ATP = O-phospho-L-threonyl-[protein] + ADP + H(+). Its activity is regulated as follows. Constitutive activity that does not require phosphorylation. Specifically inhibited by 3-(1H-indazol-5-yl)-N-propylimidazo[1,2-b]pyridazin-6-amine (CHR-6494). In terms of biological role, serine/threonine-protein kinase that phosphorylates histone H3 at 'Thr-3' (H3T3ph) during mitosis. May act through H3T3ph to both position and modulate activation of AURKB and other components of the chromosomal passenger complex (CPC) at centromeres to ensure proper chromatid cohesion, metaphase alignment and normal progression through the cell cycle. The chain is Serine/threonine-protein kinase haspin from Homo sapiens (Human).